The primary structure comprises 488 residues: Cobyric acid synthase (488 aa).

Positions D250–W438 constitute a GATase cobBQ-type domain. Catalysis depends on C331, which acts as the Nucleophile. The active site involves H430.

The protein belongs to the CobB/CobQ family. CobQ subfamily.

It functions in the pathway cofactor biosynthesis; adenosylcobalamin biosynthesis. Catalyzes amidations at positions B, D, E, and G on adenosylcobyrinic A,C-diamide. NH(2) groups are provided by glutamine, and one molecule of ATP is hydrogenolyzed for each amidation. The chain is Cobyric acid synthase from Trichodesmium erythraeum (strain IMS101).